The chain runs to 384 residues: 4-coumarate--CoA ligase (384 aa).

This sequence belongs to the ATP-dependent AMP-binding enzyme family.

The enzyme catalyses (E)-4-coumarate + ATP + CoA = (E)-4-coumaroyl-CoA + AMP + diphosphate. Converts p-coumaric acid into p-coumaryl CoA. This is necessary for the activation of the photoactive yellow protein (PYP) chromophore. This is 4-coumarate--CoA ligase (pcl) from Rhodobacter capsulatus (strain ATCC BAA-309 / NBRC 16581 / SB1003).